A 168-amino-acid polypeptide reads, in one-letter code: Alpha-N-acetylgalactosamine-specific lectin (168 aa).

The signal sequence occupies residues 1–18 (MAFFRALCFVLLVGFAAA). Residues 38 to 163 (YNGNCYRYFG…CSRAFAYVCK (126 aa)) form the C-type lectin domain. 2 disulfide bridges follow: Cys59/Cys162 and Cys136/Cys154.

In terms of assembly, monomer, homodimer and homooligomer.

In terms of biological role, alpha-N-acetylgalactosamine-specific lectin. The oligomeric form has Ca(2+)-dependent hemagglutination activity towards sheep erythrocytes. Its hemagglutination activity is inhibited by various monosaccharides, oligosaccharides and glycopeptides, including inhibition by GalNAc, blood group A trisaccharide, Tn antigen, mucin and asialomucin. The sequence is that of Alpha-N-acetylgalactosamine-specific lectin from Patiria pectinifera (Starfish).